The primary structure comprises 494 residues: Fumarate hydratase, mitochondrial (494 aa).

Residues 1–15 constitute a mitochondrion transit peptide; the sequence is MLRASATRFLSQAKN. Substrate contacts are provided by residues 128-130, 159-162, 169-171, and T217; these read SGT, HPND, and SSN. The Proton donor/acceptor role is filled by H218. Residue S348 is part of the active site. Substrate is bound by residues S349 and 354–356; that span reads KVN.

Belongs to the class-II fumarase/aspartase family. Fumarase subfamily. Homotetramer.

The protein localises to the mitochondrion matrix. The protein resides in the cytoplasm. Its subcellular location is the nucleus. It catalyses the reaction (S)-malate = fumarate + H2O. It functions in the pathway carbohydrate metabolism; tricarboxylic acid cycle; (S)-malate from fumarate: step 1/1. Catalyzes the reversible stereospecific interconversion of fumarate to L-malate. In mitochondrion, catalyzes the hydration of fumarate to L-malate in the tricarboxylic acid (TCA) cycle to facilitate a transition step in the production of energy in the form of NADH. In cytoplasm and nucleus, involved in DNA repair in response to DNA damage: following DNA double-strand breaks (DSBs), translocates from the cytosol to the nucleus and promotes DNA repair by catalyzing the dehydration of L-malate to fumarate. In Rhizopus oryzae (Mucormycosis agent), this protein is Fumarate hydratase, mitochondrial.